The following is a 193-amino-acid chain: Recombination protein RecR (193 aa).

The C4-type zinc-finger motif lies at 61–76 (CTSCNALSESEVCEIC). Residues 84–170 (SQLCMVLHPR…TFTKIAQGVP (87 aa)) form the Toprim domain.

Belongs to the RecR family.

May play a role in DNA repair. It seems to be involved in an RecBC-independent recombinational process of DNA repair. It may act with RecF and RecO. The protein is Recombination protein RecR of Helicobacter pylori (strain HPAG1).